The primary structure comprises 402 residues: UPF0261 protein y4oU (402 aa).

Belongs to the UPF0261 family.

In Sinorhizobium fredii (strain NBRC 101917 / NGR234), this protein is UPF0261 protein y4oU.